A 249-amino-acid chain; its full sequence is Vesicle-associated membrane protein-associated protein A (249 aa).

A2 carries the N-acetylalanine modification. Residues 2 to 227 (ASASGAMAKH…ASFRDNVTSP (226 aa)) are Cytoplasmic-facing. The region spanning 14 to 131 (ILVLDPPTDL…MDSKLRCVFE (118 aa)) is the MSP domain. The segment at 50–53 (KVKT) is phosphorylated FFAT motif binding. The residue at position 125 (K125) is an N6-acetyllysine. Basic and acidic residues predominate over residues 135 to 144 (ENDKLNDMEP). The disordered stretch occupies residues 135–167 (ENDKLNDMEPSKAVPLNASKQDGPMPKPHSVSL). Phosphoserine is present on S166. Positions 169–205 (DTETRKLMEECKRLQGEMMKLSEENRHLRDEGLRLRK) form a coiled coil. The residue at position 170 (T170) is a Phosphothreonine. A phosphoserine mark is found at S214, S216, and S219. Residues 228–248 (LPSLLVVIAAIFIGFFLGKFI) form a helical; Anchor for type IV membrane protein membrane-spanning segment.

This sequence belongs to the VAMP-associated protein (VAP) (TC 9.B.17) family. In terms of assembly, homodimer; disulfide-linked. Heterodimer with VAPB. Interacts with VAMP1, VAMP2, STX1A, BET1, SEC22C and with the C-terminal domain of OCLN. Interacts (via MSP domain) with OSBPL1A (via FFAT motif). Interacts (via MSP domain) with ZFYVE27; may retain ZFYVE27 in the endoplasmic reticulum and regulate its function in cell projections formation. Interacts with OSBP. Interacts (via C-terminus) with RSAD2/viperin (via C-terminus). Interacts with IFITM3. Interacts with OSBPL3 (phosphorylated form). Interacts with KIF5A in a ZFYVE27-dependent manner. Interacts (via MSP domain) with STARD3 (via phosphorylated FFAT motif); this interaction recruits VAPA to the endosome. Interacts with STARD3NL (via FFAT motif). Interacts with CERT1. Interacts with PLEKHA3 and SACM1L to form a ternary complex. Interacts with VPS13A (via FFAT motif). Interacts with RB1CC1 (via phosphorylated FFAT motif), MIGA2 (via phosphorylated FFAT motif), RMDN3 (via phosphorylated FFAT motif), KCNB1 (via phosphorylated FFAT motif) and KCNB2 (via phosphorylated FFAT motif). Interacts (via MSP domain) with WDR44 (via FFAT-like motif); the interactions connect the endoplasmic reticulum (ER) with the endosomal tubule. As to quaternary structure, (Microbial infection) Interacts with HCV protein NS5A and NS5B. In terms of tissue distribution, ubiquitous.

Its subcellular location is the endoplasmic reticulum membrane. It is found in the cell membrane. The protein resides in the cell junction. The protein localises to the tight junction. It localises to the nucleus membrane. Functionally, endoplasmic reticulum (ER)-anchored protein that mediates the formation of contact sites between the ER and endosomes via interaction with FFAT motif-containing proteins such as STARD3 or WDR44. STARD3-VAPA interaction enables cholesterol transfer from the ER to endosomes. Via interaction with WDR44 participates in neosynthesized protein export. In addition, recruited to the plasma membrane through OSBPL3 binding. The OSBPL3-VAPA complex stimulates RRAS signaling which in turn attenuates integrin beta-1 (ITGB1) activation at the cell surface. With OSBPL3, may regulate ER morphology. May play a role in vesicle trafficking. In Homo sapiens (Human), this protein is Vesicle-associated membrane protein-associated protein A.